The sequence spans 219 residues: MGTFFQKIADYSKDAVSAGKYLLQGLAVTFDHMRRRPITVQYPYEKLIPSERYRGRIHYEFDKCIACEVCVRVCPINLPVVDWVMNKETKKKELRNYSIDFGVCIFCGNCVEYCPTNCLSMTEEYELAAFDRHSLNFDNVALGRLPTSVTSDPSVMPLRELGYLPEGVMDPHELPKDSSRAGKLPIEIMDWMKNKESNKSEDNNLDININSLKVEKDSK.

2 4Fe-4S ferredoxin-type domains span residues glycine 55–valine 84 and arginine 95–glutamate 124. Residues cysteine 64, cysteine 67, cysteine 70, cysteine 74, cysteine 104, cysteine 107, cysteine 110, and cysteine 114 each coordinate [4Fe-4S] cluster.

It belongs to the complex I 23 kDa subunit family. In terms of assembly, NDH-1 is composed of at least 11 different subunits. Requires [4Fe-4S] cluster as cofactor.

It localises to the cellular thylakoid membrane. The catalysed reaction is a plastoquinone + NADH + (n+1) H(+)(in) = a plastoquinol + NAD(+) + n H(+)(out). It catalyses the reaction a plastoquinone + NADPH + (n+1) H(+)(in) = a plastoquinol + NADP(+) + n H(+)(out). In terms of biological role, NDH-1 shuttles electrons from an unknown electron donor, via FMN and iron-sulfur (Fe-S) centers, to quinones in the respiratory and/or the photosynthetic chain. The immediate electron acceptor for the enzyme in this species is believed to be plastoquinone. Couples the redox reaction to proton translocation, and thus conserves the redox energy in a proton gradient. The protein is NAD(P)H-quinone oxidoreductase subunit I of Prochlorococcus marinus (strain SARG / CCMP1375 / SS120).